Consider the following 561-residue polypeptide: Arginine--tRNA ligase (561 aa).

Positions 129–139 match the 'HIGH' region motif; sequence ANPTGPLHIGH.

Belongs to the class-I aminoacyl-tRNA synthetase family. As to quaternary structure, monomer.

The protein resides in the cytoplasm. It carries out the reaction tRNA(Arg) + L-arginine + ATP = L-arginyl-tRNA(Arg) + AMP + diphosphate. The protein is Arginine--tRNA ligase of Geotalea uraniireducens (strain Rf4) (Geobacter uraniireducens).